Reading from the N-terminus, the 104-residue chain is MNGTIYQRIEDNAHFRELVEKRQRFATILSIIMLAVYIGFILLIAFAPGWLGTPLNPNTSVTRGIPIGVGVIVISFVLTGIYIWRANGEFDRLNNEVLHEVQAS.

The Cytoplasmic portion of the chain corresponds to 1 to 24 (MNGTIYQRIEDNAHFRELVEKRQR). Residues 25 to 47 (FATILSIIMLAVYIGFILLIAFA) form a helical membrane-spanning segment. At 48–61 (PGWLGTPLNPNTSV) the chain is on the periplasmic side. Residues 62–84 (TRGIPIGVGVIVISFVLTGIYIW) traverse the membrane as a helical segment. Residues 85–104 (RANGEFDRLNNEVLHEVQAS) lie on the Cytoplasmic side of the membrane.

The protein localises to the cell inner membrane. This chain is Inner membrane protein YjcH (yjcH), found in Escherichia coli (strain K12).